The sequence spans 562 residues: Protein wntless (562 aa).

The Cytoplasmic segment spans residues 1–13 (MSGTILENLSGRK). Residues 14-34 (LSILVATLLLCQVLCFLLGGL) traverse the membrane as a helical segment. Over 35 to 239 (YAPLPAGHVT…AIHQNGGFTQ (205 aa)) the chain is Lumenal. The N-linked (GlcNAc...) asparagine glycan is linked to Asn58. Residues 240–260 (IWLLLKTMLFPFVVGIMIWFW) traverse the membrane as a helical segment. Residues 261–270 (RRVHLLQRSP) are Cytoplasmic-facing. A helical membrane pass occupies residues 271 to 291 (ALLEYMLIYLGAALTFLNLPL). Over 292-311 (EYLSLVYEMPYMLLLSDIRQ) the chain is Lumenal. The chain crosses the membrane as a helical span at residues 312–332 (GIFYAMLLTFWLVFAGEHMLI). Over 333–344 (QDAPNKSTIRSR) the chain is Cytoplasmic. Residues 345–365 (YWKHLSAVVVGCISLFVFDIC) form a helical membrane-spanning segment. Over 366-390 (ERGVQLRNPFYSIWTTPLGAKVAMT) the chain is Lumenal. A helical transmembrane segment spans residues 391 to 411 (FIVLAGVSAAIYFLFLCYMIW). Residues 412 to 441 (KVFRNIGDKRTSLPSMSQARRLHYEGLIYR) are Cytoplasmic-facing. The chain crosses the membrane as a helical span at residues 442-462 (FKFLMLATLVCAALTVAGFIM). The Lumenal portion of the chain corresponds to 463-482 (GQMAEGQWDWNDNVAIQPTS). The helical transmembrane segment at 483–503 (AFLTGVYGMWNIYIFALLILY) threads the bilayer. The Cytoplasmic portion of the chain corresponds to 504–562 (APSHKQWPAMHHSDETTQSNENIVASAASEEIEFSHLPSDSNPSEISSLTSFTRKVAFD).

Belongs to the wntless family. As to quaternary structure, interacts with wg; in the Golgi. Interacts with Vps35, a component of the retromer complex; wls stability is regulated by Vps35.

It is found in the presynaptic cell membrane. The protein localises to the postsynaptic cell membrane. It localises to the cell membrane. Its subcellular location is the endoplasmic reticulum membrane. The protein resides in the endosome membrane. It is found in the golgi apparatus membrane. In terms of biological role, a segment polarity gene required for wingless (wg)-dependent patterning processes, acting in both wg-sending cells and wg-target cells. In non-neuronal cells wls directs wg secretion. The wls traffic loop encompasses the Golgi, the cell surface, an endocytic compartment and a retrograde route leading back to the Golgi, and involves clathrin-mediated endocytosis and the retromer complex (a conserved protein complex consisting of Vps35 and Vps26). In neuronal cells (the larval motorneuron NMJ), the wg signal moves across the synapse via the release of wls-containing exosome-like vesicles. Postsynaptic wls is required for the trafficking of fz2 through the fz2-interacting protein Grip. The chain is Protein wntless from Drosophila sechellia (Fruit fly).